Here is a 272-residue protein sequence, read N- to C-terminus: Putative phosphoenolpyruvate synthase regulatory protein (272 aa).

152-159 (GVSRCGKT) contacts ADP.

This sequence belongs to the pyruvate, phosphate/water dikinase regulatory protein family. PSRP subfamily.

It carries out the reaction [pyruvate, water dikinase] + ADP = [pyruvate, water dikinase]-phosphate + AMP + H(+). It catalyses the reaction [pyruvate, water dikinase]-phosphate + phosphate + H(+) = [pyruvate, water dikinase] + diphosphate. Bifunctional serine/threonine kinase and phosphorylase involved in the regulation of the phosphoenolpyruvate synthase (PEPS) by catalyzing its phosphorylation/dephosphorylation. The chain is Putative phosphoenolpyruvate synthase regulatory protein from Pseudomonas fluorescens (strain ATCC BAA-477 / NRRL B-23932 / Pf-5).